A 225-amino-acid polypeptide reads, in one-letter code: MAIKDWPEGEGPRDKLLVKGAAHLSDAELLAVLLRNGLSGLNAVDLARSLIHEFGGLRSLLCAPKHQVCRLPGVGPVKYAQLQAAAELARRVAQENLQRGQVLTNPDLTRDYLMRQLADRSYEVFAILLLDSQHRVIQFVELFRGTIDSASVYPREVVSLVLEKKAAAVIVCHNHPSGIAEPSQADRRITERLKNALATIDVSLLDHMVVGDREIVSFAERGWIN.

The region spanning 102–224 (VLTNPDLTRD…IVSFAERGWI (123 aa)) is the MPN domain. Positions 173, 175, and 186 each coordinate Zn(2+). The JAMM motif motif lies at 173-186 (HNHPSGIAEPSQAD).

It belongs to the UPF0758 family.

The sequence is that of UPF0758 protein Shewmr7_0359 from Shewanella sp. (strain MR-7).